Here is a 140-residue protein sequence, read N- to C-terminus: Small ribosomal subunit protein bS16 (140 aa).

Positions Thr-86–Gly-140 are disordered. The span at Ala-94–Ala-114 shows a compositional bias: basic and acidic residues. Residues Glu-115–Ala-124 show a composition bias toward low complexity. Residues Ala-130–Gly-140 show a composition bias toward acidic residues.

This sequence belongs to the bacterial ribosomal protein bS16 family.

This is Small ribosomal subunit protein bS16 from Parasynechococcus marenigrum (strain WH8102).